We begin with the raw amino-acid sequence, 360 residues long: D-alanine--D-alanine ligase (360 aa).

Residues lysine 149–glutamine 353 enclose the ATP-grasp domain. Position 176 to 231 (lysine 176 to glutamate 231) interacts with ATP. Aspartate 308, glutamate 320, and asparagine 322 together coordinate Mg(2+).

This sequence belongs to the D-alanine--D-alanine ligase family. Requires Mg(2+) as cofactor. The cofactor is Mn(2+).

The protein resides in the cytoplasm. It carries out the reaction 2 D-alanine + ATP = D-alanyl-D-alanine + ADP + phosphate + H(+). Its pathway is cell wall biogenesis; peptidoglycan biosynthesis. In terms of biological role, cell wall formation. This chain is D-alanine--D-alanine ligase, found in Corynebacterium glutamicum (strain ATCC 13032 / DSM 20300 / JCM 1318 / BCRC 11384 / CCUG 27702 / LMG 3730 / NBRC 12168 / NCIMB 10025 / NRRL B-2784 / 534).